A 419-amino-acid chain; its full sequence is Probable pectate lyase C (419 aa).

A signal peptide spans 1–19 (MRLTPSLISCLSLLHFTSA). N-linked (GlcNAc...) asparagine glycosylation is found at N48, N164, and N201. Residue R204 is part of the active site. Residues 261–296 (NENFHAYVETNYYDSDKDGTLNGSELGVDSTNYGGM) enclose the EF-hand domain. Residues D274, D276, D278, and T280 each coordinate Ca(2+). Residue N282 is glycosylated (N-linked (GlcNAc...) asparagine). E285 is a binding site for Ca(2+). A disordered region spans residues 352-395 (ISDEADMGGAGDLDQGTTPTDTDGDGIPDDAEAELGTDPNTADS). Low complexity predominate over residues 363-372 (DLDQGTTPTD). The span at 373–386 (TDGDGIPDDAEAEL) shows a compositional bias: acidic residues.

It belongs to the polysaccharide lyase 1 family. Ca(2+) is required as a cofactor.

The protein localises to the secreted. It carries out the reaction Eliminative cleavage of (1-&gt;4)-alpha-D-galacturonan to give oligosaccharides with 4-deoxy-alpha-D-galact-4-enuronosyl groups at their non-reducing ends.. Pectinolytic enzyme consist of four classes of enzymes: pectin lyase, polygalacturonase, pectin methylesterase and rhamnogalacturonase. Among pectinolytic enzymes, pectin lyase is the most important in depolymerization of pectin, since it cleaves internal glycosidic bonds of highly methylated pectins. Favors pectate, the anion, over pectin, the methyl ester. In Aspergillus oryzae (strain ATCC 42149 / RIB 40) (Yellow koji mold), this protein is Probable pectate lyase C (plyC).